The chain runs to 352 residues: Palmitoyltransferase PFA5 (352 aa).

2 consecutive transmembrane segments (helical) span residues 12 to 32 (YWTI…GTWA) and 53 to 73 (IGLI…WVLI). Positions 114-164 (VWCSNCQSLKVGRTKHSSHQGHCVPRFDHYCVWLGAVIGFKNYRLFVQFVF) constitute a DHHC domain. Cysteine 144 serves as the catalytic S-palmitoyl cysteine intermediate. Helical transmembrane passes span 159-179 (FVQF…TISV) and 195-215 (LIVL…LFVS).

Belongs to the DHHC palmitoyltransferase family. PFA5 subfamily.

It localises to the membrane. It carries out the reaction L-cysteinyl-[protein] + hexadecanoyl-CoA = S-hexadecanoyl-L-cysteinyl-[protein] + CoA. In Candida glabrata (strain ATCC 2001 / BCRC 20586 / JCM 3761 / NBRC 0622 / NRRL Y-65 / CBS 138) (Yeast), this protein is Palmitoyltransferase PFA5 (PFA5).